Reading from the N-terminus, the 154-residue chain is MGNRCARTSCCRKLWSCICCCSNNNNNSYGQTRSQHGSKGKVHPVSRIEKWEEKITEANNHGKILVVNFSAPWCVPCKKIEPVFRDLASRYPSMIFVTVDVEELAEFSNEWNVEATPTVVFLKDGRQMDKLVGAETSELQKKTAAAADLFLRKP.

The 125-residue stretch at Asn-24–Asp-148 folds into the Thioredoxin domain. Residues Cys-74 and Cys-77 each act as nucleophile in the active site. A disulfide bridge connects residues Cys-74 and Cys-77.

The protein belongs to the thioredoxin family.

It is found in the cytoplasm. In terms of biological role, probable thiol-disulfide oxidoreductase that may be involved in the redox regulation of a number of cytosolic enzymes. The sequence is that of Putative thioredoxin H10 from Arabidopsis thaliana (Mouse-ear cress).